Here is a 231-residue protein sequence, read N- to C-terminus: Trypsin (231 aa).

Positions 1-8 (FPTDDDDK) are cleaved as a propeptide — activation peptide. The 221-residue stretch at 9–229 (IVGGYTCAAN…YVNWIQQTIA (221 aa)) folds into the Peptidase S1 domain. Intrachain disulfides connect C15–C145, C33–C49, C117–C218, C124–C191, C156–C170, and C181–C205. H48 functions as the Charge relay system in the catalytic mechanism. Residues E60, N62, V65, and E70 each contribute to the Ca(2+) site. D92 acts as the Charge relay system in catalysis. The active-site Charge relay system is S185.

The protein belongs to the peptidase S1 family. The cofactor is Ca(2+).

The protein localises to the secreted. It localises to the extracellular space. The enzyme catalyses Preferential cleavage: Arg-|-Xaa, Lys-|-Xaa.. This Sus scrofa (Pig) protein is Trypsin.